We begin with the raw amino-acid sequence, 160 residues long: Aspartate carbamoyltransferase regulatory chain (160 aa).

Zn(2+) contacts are provided by Cys110, Cys115, Cys140, and Cys143.

Belongs to the PyrI family. As to quaternary structure, contains catalytic and regulatory chains. Zn(2+) is required as a cofactor.

Involved in allosteric regulation of aspartate carbamoyltransferase. The sequence is that of Aspartate carbamoyltransferase regulatory chain from Hyperthermus butylicus (strain DSM 5456 / JCM 9403 / PLM1-5).